The following is a 1188-amino-acid chain: Adenomatous polyposis coli protein-related protein 1 (1188 aa).

Residues 1-50 form a disordered region; it reads MSSSSSDENETTIHRTGSNTGGSGIYSQPRAGSSKRTSNVRHDVSDVDDE. Residues 1 to 486 form a required for interaction with bar-1 and hmp-2 region; the sequence is MSSSSSDENE…LSLRATRASP (486 aa). One copy of the ARM repeat lies at 314–358; it reads NCLKVLASLLSPDARFTSLVDSATGILKYVSQYLANTSTHLELRS. The span at 579–588 shows a compositional bias: low complexity; that stretch reads IQQQQQMQKA. Disordered regions lie at residues 579–624, 670–702, 726–751, 778–952, 1003–1092, and 1157–1181; these read IQQQ…SMNP, TESE…DGAT, TPNG…GPSL, QSEM…TMRF, CSMI…LKDK, and YQKP…PNPK. A required for interaction with pry-1 region spans residues 600–1188; it reads DLDIPTSTVM…NPKQMLVTIV (589 aa). 2 stretches are compositionally biased toward polar residues: residues 604–624 and 677–701; these read PTST…SMNP and LTSQ…SDGA. Composition is skewed to polar residues over residues 778 to 788 and 800 to 811; these read QSEMPTSSSTP and FSPTQKTTSSPA. Composition is skewed to basic and acidic residues over residues 832-843 and 871-900; these read RRQDASDADRLL and EPER…DHNG. 4 stretches are compositionally biased toward polar residues: residues 909–929, 937–946, 1014–1039, and 1164–1180; these read WSPQ…SSED, EPNSSTSGAA, QRNE…SASS, and GRNN…TPNP.

Belongs to the adenomatous polyposis coli (APC) family. Interacts (via N-terminus) with bar-1 and hmp-2; the interaction with hmp-2 is relatively weak. Interacts (via C-terminus) with pry-1 (via N-terminus). Probably associates with bar-1, gsk-3, pry-1 in a complex. During the L1 stage, expressed in vulval precursor cells (P3-8.p), seam cells and excretory cells.

It is found in the cell junction. Its subcellular location is the adherens junction. It localises to the cytoplasm. The protein resides in the nucleus. Functionally, has a role in endoderm cell specification and pharyngeal development. Required for the migration of epithelial cells, organization of the anterior seam cells and ceh-13 expression during embryo morphogenesis. Prevents hyperactivation of the Wnt signaling pathway during endoderm development, probably by preventing hmp-2 nuclear translocation. During larval development, apr-1 is required for expression of lin-39 in P3-8.p. Shown to negatively regulate Wnt signaling in vulval precursor cells. Has a role in cell division by establishing the polarity of the mother cell which forms the asymmetries of the daughter nuclei. During the L4 larval stage, it is required for the asymmetric division and self-renewal of seam cells. Thought to regulate export of wrm-1 from the nucleus possibly as part of a complex involving pry-1. This Caenorhabditis elegans protein is Adenomatous polyposis coli protein-related protein 1.